A 186-amino-acid chain; its full sequence is Chromosomal replication initiator protein DnaA (186 aa).

Residue Glu1 is a region of interest, domain I, interacts with DnaA modulators. Position 1 (Glu1) is a region of interest, domain II. The interval 1-99 (EFFKTFNALI…GALNKVTHTS (99 aa)) is domain III, AAA+ region. The domain IV, binds dsDNA stretch occupies residues 100–186 (LIGRSMTVES…GRNFGGRDHT (87 aa)).

The protein belongs to the DnaA family. Oligomerizes as a right-handed, spiral filament on DNA at oriC.

The protein localises to the cytoplasm. Its function is as follows. Plays an essential role in the initiation and regulation of chromosomal replication. ATP-DnaA binds to the origin of replication (oriC) to initiate formation of the DNA replication initiation complex once per cell cycle. Binds the DnaA box (a 9 base pair repeat at the origin) and separates the double-stranded (ds)DNA. Forms a right-handed helical filament on oriC DNA; dsDNA binds to the exterior of the filament while single-stranded (ss)DNA is stabiized in the filament's interior. The ATP-DnaA-oriC complex binds and stabilizes one strand of the AT-rich DNA unwinding element (DUE), permitting loading of DNA polymerase. After initiation quickly degrades to an ADP-DnaA complex that is not apt for DNA replication. Binds acidic phospholipids. This chain is Chromosomal replication initiator protein DnaA, found in Wolbachia sp.